The following is a 368-amino-acid chain: Quinolinate synthase (368 aa).

Iminosuccinate is bound by residues His46 and Ser63. Cys110 serves as a coordination point for [4Fe-4S] cluster. Iminosuccinate is bound by residues 141 to 143 (YVN) and Ser162. Cys230 contributes to the [4Fe-4S] cluster binding site. Iminosuccinate-binding positions include 256 to 258 (HPE) and Thr273. Position 320 (Cys320) interacts with [4Fe-4S] cluster.

It belongs to the quinolinate synthase family. Type 3 subfamily. It depends on [4Fe-4S] cluster as a cofactor.

It localises to the cytoplasm. It catalyses the reaction iminosuccinate + dihydroxyacetone phosphate = quinolinate + phosphate + 2 H2O + H(+). The protein operates within cofactor biosynthesis; NAD(+) biosynthesis; quinolinate from iminoaspartate: step 1/1. Functionally, catalyzes the condensation of iminoaspartate with dihydroxyacetone phosphate to form quinolinate. The protein is Quinolinate synthase of Bacillus cereus (strain B4264).